Reading from the N-terminus, the 277-residue chain is MAIKKYKPITNGRRNMTSLDFAEITKTTPEKSLLKPLPKKAGRNNQGKLTVRHHGGGHKRQYRVIDFKRNKDGINAKVDSIQYDPNRSANIALVVYADGEKRYIIAPKGLEVGQIVESGAEADIKVGNALPLQNIPVGTVVHNIELKPGKGGQIARSAGASAQVLGKEGKYVLIRLRSGEVRMILSTCRATIGQVGNLQHELVNVGKAGRSRWKGIRPTVRGSVMNPNDHPHGGGEGRAPIGRPSPMSPWGKPTLGKKTRRGKKSSDKLIVRGRKKK.

2 disordered regions span residues 36-55 (PLPK…RHHG) and 213-277 (WKGI…RKKK).

The protein belongs to the universal ribosomal protein uL2 family. As to quaternary structure, part of the 50S ribosomal subunit. Forms a bridge to the 30S subunit in the 70S ribosome.

Its function is as follows. One of the primary rRNA binding proteins. Required for association of the 30S and 50S subunits to form the 70S ribosome, for tRNA binding and peptide bond formation. It has been suggested to have peptidyltransferase activity; this is somewhat controversial. Makes several contacts with the 16S rRNA in the 70S ribosome. This Staphylococcus aureus (strain bovine RF122 / ET3-1) protein is Large ribosomal subunit protein uL2.